A 397-amino-acid polypeptide reads, in one-letter code: Tryptophan synthase beta chain (397 aa).

At lysine 87 the chain carries N6-(pyridoxal phosphate)lysine.

This sequence belongs to the TrpB family. As to quaternary structure, tetramer of two alpha and two beta chains. It depends on pyridoxal 5'-phosphate as a cofactor.

It carries out the reaction (1S,2R)-1-C-(indol-3-yl)glycerol 3-phosphate + L-serine = D-glyceraldehyde 3-phosphate + L-tryptophan + H2O. Its pathway is amino-acid biosynthesis; L-tryptophan biosynthesis; L-tryptophan from chorismate: step 5/5. Functionally, the beta subunit is responsible for the synthesis of L-tryptophan from indole and L-serine. The protein is Tryptophan synthase beta chain of Klebsiella pneumoniae (strain 342).